The primary structure comprises 235 residues: Secretory carrier-associated membrane protein 5 (235 aa).

Topologically, residues 1 to 39 (MAEKVNNFPPLPKFIPLKPCFYQDFEADIPPQHLSLTKR) are cytoplasmic. Residues 40 to 60 (LYYLWMLNSVTLAVNLVGCLA) form a helical membrane-spanning segment. Residues 61–67 (WLIGGGG) are Extracellular-facing. The chain crosses the membrane as a helical span at residues 68-88 (ATNFGLAFLWLILFTPCSYVC). Residues 89-102 (WFRPIYKAFKTDSS) are Cytoplasmic-facing. Residues 103 to 125 (FSFMAFFFTFMAQLVISIIQAVG) traverse the membrane as a helical segment. The Extracellular portion of the chain corresponds to 126–148 (IPGWGVCGWIATISFFGTNIGSA). A helical membrane pass occupies residues 149 to 169 (VVMLIPTVMFTVVAVFSFIAL). Residues 170-235 (SMVHKFYRGS…TPNYTYSNEM (66 aa)) lie on the Cytoplasmic side of the membrane.

The protein belongs to the SCAMP family. SCAMP5 subfamily. As to quaternary structure, interacts (via C-terminal part) with SYT1 and SYT2; interaction with synaptotagmins making a link with the SNARE molecules. Interacts with SLC9A7. In terms of tissue distribution, brain-specific.

It is found in the cell membrane. The protein resides in the golgi apparatus membrane. It localises to the golgi apparatus. Its subcellular location is the trans-Golgi network membrane. The protein localises to the recycling endosome membrane. It is found in the cytoplasmic vesicle. The protein resides in the secretory vesicle. It localises to the synaptic vesicle membrane. Functionally, required for the calcium-dependent exocytosis of signal sequence-containing cytokines such as CCL5. Probably acts in cooperation with the SNARE machinery. This Mus musculus (Mouse) protein is Secretory carrier-associated membrane protein 5 (Scamp5).